Consider the following 178-residue polypeptide: Interleukin-10 (178 aa).

The N-terminal stretch at 1–18 (MHSSALLCCLVLLTGVRA) is a signal peptide. 2 disulfides stabilise this stretch: C30/C126 and C80/C132. An N-linked (GlcNAc...) asparagine glycan is attached at N134.

This sequence belongs to the IL-10 family. As to quaternary structure, homodimer. Interacts with IL10RA and IL10RB.

Its subcellular location is the secreted. Major immune regulatory cytokine that acts on many cells of the immune system where it has profound anti-inflammatory functions, limiting excessive tissue disruption caused by inflammation. Mechanistically, IL10 binds to its heterotetrameric receptor comprising IL10RA and IL10RB leading to JAK1 and STAT2-mediated phosphorylation of STAT3. In turn, STAT3 translocates to the nucleus where it drives expression of anti-inflammatory mediators. Targets antigen-presenting cells (APCs) such as macrophages and monocytes and inhibits their release of pro-inflammatory cytokines including granulocyte-macrophage colony-stimulating factor /GM-CSF, granulocyte colony-stimulating factor/G-CSF, IL-1 alpha, IL-1 beta, IL-6, IL-8 and TNF-alpha. Also interferes with antigen presentation by reducing the expression of MHC-class II and co-stimulatory molecules, thereby inhibiting their ability to induce T cell activation. In addition, controls the inflammatory response of macrophages by reprogramming essential metabolic pathways including mTOR signaling. This Macaca nemestrina (Pig-tailed macaque) protein is Interleukin-10 (IL10).